Reading from the N-terminus, the 807-residue chain is Dual specificity protein phosphatase PPS1 (807 aa).

In terms of domain architecture, Tyrosine-protein phosphatase spans 585–783 (LPSRILRHLY…LFKWWKKHYN (199 aa)). The tract at residues 593-807 (LYLGSLDHAQ…GIAEVNMKYT (215 aa)) is catalytic. The Phosphocysteine intermediate role is filled by Cys-725.

Belongs to the protein-tyrosine phosphatase family. Non-receptor class dual specificity subfamily.

It catalyses the reaction O-phospho-L-tyrosyl-[protein] + H2O = L-tyrosyl-[protein] + phosphate. It carries out the reaction O-phospho-L-seryl-[protein] + H2O = L-seryl-[protein] + phosphate. The enzyme catalyses O-phospho-L-threonyl-[protein] + H2O = L-threonyl-[protein] + phosphate. Functionally, protein phosphatase with specificity for serine, threonine, and tyrosine residues; has a role in the DNA synthesis phase of the cell cycle. In Saccharomyces cerevisiae (strain ATCC 204508 / S288c) (Baker's yeast), this protein is Dual specificity protein phosphatase PPS1 (PPS1).